Consider the following 196-residue polypeptide: uncharacterized protein (196 aa).

Positions 1 to 27 are cleaved as a signal peptide; that stretch reads MSVLSRAVQLAFVALGLCLFFSNLVAA.

It is found in the secreted. This is an uncharacterized protein from Arthroderma benhamiae (strain ATCC MYA-4681 / CBS 112371) (Trichophyton mentagrophytes).